The chain runs to 422 residues: Ena/VASP-like protein (422 aa).

The WH1 domain occupies 4–118 (FEEFSEQSIC…NAMLFALNIM (115 aa)). Positions 120–135 (SQEGGPSSQRQVQNGP) are enriched in polar residues. Disordered regions lie at residues 120 to 139 (SQEG…SPDE) and 147 to 375 (VMEQ…PAGS). Ser136 is subject to Phosphoserine. The span at 147–163 (VMEQHQQQRQESLERRT) shows a compositional bias: basic and acidic residues. Over residues 175-186 (PSSAASAPVSCS) the composition is skewed to low complexity. Pro residues predominate over residues 187–212 (GPPPPPPPPVPPPPTGATPPPPPPLP). Residues 228–248 (GLAAAIAGAKLRRVQRPEDAS) are EVH2 block A. The EVH2 stretch occupies residues 228 to 419 (GLAAAIAGAK…DAIRQELSGI (192 aa)). A KLKR motif is present at residues 237-240 (KLRR). Residues 248–259 (SGGSSPSGTSKS) are compositionally biased toward low complexity. A phosphoserine mark is found at Ser252 and Ser265. The interval 271-288 (GGLMEEMNKLLAKRRKAA) is EVH2 block B. Positions 305 to 326 (EDPSTSPSPGTRAASQPPNSSE) are enriched in polar residues. A phosphoserine mark is found at Ser310, Ser312, Ser335, Ser337, Ser347, Ser355, Ser360, and Ser375. The span at 327 to 337 (AGRKPWERSNS) shows a compositional bias: basic and acidic residues. The tract at residues 348–368 (RTPSVAKSPEAKSPLQSQPHS) is required for interaction with ZDHHC17. An EVH2 block C region spans residues 385–419 (DLDRMKQEILEEVVRELHKVKDEIIDAIRQELSGI). A coiled-coil region spans residues 388–414 (RMKQEILEEVVRELHKVKDEIIDAIRQ).

The protein belongs to the Ena/VASP family. As to quaternary structure, homotetramer. Binds to the SH3 domains of ABL1, LYN and SRC. Also binds to profilin, with preference for isoform IIa of PFN2, and the WW domain of APBB1/FE65. Binds to SEMA6A. Interacts, via the Pro-rich region, with the C-terminal SH3 domain of DNMBP. Interacts with RAPH1. Binds, via the EVH1 domain, the Pro-rich domain of Listeria monocytogenes actA. Binds, via the EVH1 domain, the Pro-rich domain of ZYX. Interacts with FYB1. Interacts with ZDHHC17. Post-translationally, phosphorylated by PKA; phosphorylation abolishes binding to SH3 domains of ABL and SRC.

It is found in the cytoplasm. The protein resides in the cytoskeleton. The protein localises to the stress fiber. It localises to the cell projection. Its subcellular location is the lamellipodium. Functionally, ena/VASP proteins are actin-associated proteins involved in a range of processes dependent on cytoskeleton remodeling and cell polarity such as axon guidance and lamellipodial and filopodial dynamics in migrating cells. EVL enhances actin nucleation and polymerization. This Pongo abelii (Sumatran orangutan) protein is Ena/VASP-like protein (EVL).